An 89-amino-acid chain; its full sequence is MAKESMKAREVKREKTVAKYAEKRKALLEAGDYEGLQRLPKNASPVRLHNRCKLTGRPRGYIRQFGISRVTFREMANNGLIPGVKKASW.

It belongs to the universal ribosomal protein uS14 family. As to quaternary structure, part of the 30S ribosomal subunit. Contacts proteins S3 and S10.

Functionally, binds 16S rRNA, required for the assembly of 30S particles and may also be responsible for determining the conformation of the 16S rRNA at the A site. In Flavobacterium johnsoniae (strain ATCC 17061 / DSM 2064 / JCM 8514 / BCRC 14874 / CCUG 350202 / NBRC 14942 / NCIMB 11054 / UW101) (Cytophaga johnsonae), this protein is Small ribosomal subunit protein uS14.